The sequence spans 526 residues: Phenylacetaldehyde oxime monooxygenase CYP71AN24 (526 aa).

The helical transmembrane segment at 22–42 threads the bilayer; that stretch reads SFNIFLVPILCLSIFILFSLT. Position 465 (cysteine 465) interacts with heme.

It belongs to the cytochrome P450 family. Requires heme as cofactor. Expressed in seedlings and leaves.

It localises to the membrane. The enzyme catalyses (E)-phenylacetaldehyde oxime + reduced [NADPH--hemoprotein reductase] + O2 = (R)-mandelonitrile + oxidized [NADPH--hemoprotein reductase] + 2 H2O + H(+). It catalyses the reaction phenylacetonitrile + reduced [NADPH--hemoprotein reductase] + O2 = (R)-mandelonitrile + oxidized [NADPH--hemoprotein reductase] + H2O + H(+). Its function is as follows. Involved in L-phenylalanine-derived cyanogenic glycoside biosynthesis, including prunasin and amygdalin defensive agents. Catalyzes the conversion of phenylacetaldoxime (PAOx) and phenylacetonitrile (PAN) into mandelonitrile (MAN). To a lower extent, can convert various aromatic aldoximes and nitriles; mediates the transformation of 4-hydroxyphenylacetaldoxime, 4-hydroxyphenylacetonitrile, indole-3-acetal-doxime and indole-3-acetonitrile into the corresponding hydroxynitriles, but cannot use the aliphatic compounds 2-methylpropanaloxime and 2-methylpropanenitrile as substrates. The polypeptide is Phenylacetaldehyde oxime monooxygenase CYP71AN24 (Prunus mume (Japanese apricot)).